We begin with the raw amino-acid sequence, 220 residues long: FMN-dependent NADH:quinone oxidoreductase (220 aa).

FMN-binding positions include Ser-10, 17-19 (SAS), and 136-139 (SRGG). Positions 200-220 (HSEAVTKAKELTERLTADNGR) are disordered.

This sequence belongs to the azoreductase type 1 family. In terms of assembly, homodimer. It depends on FMN as a cofactor.

It catalyses the reaction 2 a quinone + NADH + H(+) = 2 a 1,4-benzosemiquinone + NAD(+). It carries out the reaction N,N-dimethyl-1,4-phenylenediamine + anthranilate + 2 NAD(+) = 2-(4-dimethylaminophenyl)diazenylbenzoate + 2 NADH + 2 H(+). Functionally, quinone reductase that provides resistance to thiol-specific stress caused by electrophilic quinones. Its function is as follows. Also exhibits azoreductase activity. Catalyzes the reductive cleavage of the azo bond in aromatic azo compounds to the corresponding amines. The chain is FMN-dependent NADH:quinone oxidoreductase from Streptomyces coelicolor (strain ATCC BAA-471 / A3(2) / M145).